A 387-amino-acid polypeptide reads, in one-letter code: Phosphoglycerate kinase (387 aa).

Substrate contacts are provided by residues 21 to 23, Arg-36, 59 to 62, Arg-113, and Arg-146; these read DLN and HLGR. Residues Lys-197, Glu-314, and 340 to 343 each bind ATP; that span reads GGDT.

Belongs to the phosphoglycerate kinase family. Monomer.

The protein resides in the cytoplasm. The enzyme catalyses (2R)-3-phosphoglycerate + ATP = (2R)-3-phospho-glyceroyl phosphate + ADP. It participates in carbohydrate degradation; glycolysis; pyruvate from D-glyceraldehyde 3-phosphate: step 2/5. The sequence is that of Phosphoglycerate kinase from Photorhabdus laumondii subsp. laumondii (strain DSM 15139 / CIP 105565 / TT01) (Photorhabdus luminescens subsp. laumondii).